We begin with the raw amino-acid sequence, 893 residues long: Alanine--tRNA ligase (893 aa).

The Zn(2+) site is built by His-573, His-577, Cys-676, and His-680. The interval Leu-853 to Ser-872 is disordered.

Belongs to the class-II aminoacyl-tRNA synthetase family. It depends on Zn(2+) as a cofactor.

It is found in the cytoplasm. It catalyses the reaction tRNA(Ala) + L-alanine + ATP = L-alanyl-tRNA(Ala) + AMP + diphosphate. Catalyzes the attachment of alanine to tRNA(Ala) in a two-step reaction: alanine is first activated by ATP to form Ala-AMP and then transferred to the acceptor end of tRNA(Ala). Also edits incorrectly charged Ser-tRNA(Ala) and Gly-tRNA(Ala) via its editing domain. This is Alanine--tRNA ligase from Kineococcus radiotolerans (strain ATCC BAA-149 / DSM 14245 / SRS30216).